A 161-amino-acid chain; its full sequence is Protein shisa-like-2B (161 aa).

A helical transmembrane segment spans residues 65–85; the sequence is IGALIGLGIAALVLLAFVISV. The disordered stretch occupies residues 115–134; the sequence is QEGNSNRKSKAPRSNAASNS.

This sequence belongs to the shisa family.

The protein localises to the membrane. In Bos taurus (Bovine), this protein is Protein shisa-like-2B (SHISAL2B).